Consider the following 225-residue polypeptide: Urease accessory protein UreG 2 (225 aa).

GTP is bound at residue 31 to 38 (GPVGSGKT).

This sequence belongs to the SIMIBI class G3E GTPase family. UreG subfamily. In terms of assembly, homodimer. UreD, UreF and UreG form a complex that acts as a GTP-hydrolysis-dependent molecular chaperone, activating the urease apoprotein by helping to assemble the nickel containing metallocenter of UreC. The UreE protein probably delivers the nickel.

Its subcellular location is the cytoplasm. In terms of biological role, facilitates the functional incorporation of the urease nickel metallocenter. This process requires GTP hydrolysis, probably effectuated by UreG. This is Urease accessory protein UreG 2 from Streptomyces griseus subsp. griseus (strain JCM 4626 / CBS 651.72 / NBRC 13350 / KCC S-0626 / ISP 5235).